A 485-amino-acid chain; its full sequence is Poly(ADP-ribose) glycohydrolase 2 (485 aa).

This sequence belongs to the poly(ADP-ribose) glycohydrolase family. As to expression, expressed in head and tail neurons.

It is found in the cytoplasm. The catalysed reaction is [(1''-&gt;2')-ADP-alpha-D-ribose](n) + H2O = [(1''-&gt;2')-ADP-alpha-D-ribose](n-1) + ADP-D-ribose. Its function is as follows. Poly(ADP-ribose) synthesized after DNA damage is only present transiently and is rapidly degraded by poly(ADP-ribose) glycohydrolase. Poly(ADP-ribose) metabolism may be required for maintenance of the normal function of neuronal cells. The polypeptide is Poly(ADP-ribose) glycohydrolase 2 (Caenorhabditis elegans).